The sequence spans 782 residues: Endonuclease MutS2 (782 aa).

336 to 343 (GPNTGGKT) lines the ATP pocket. In terms of domain architecture, Smr spans 707–782 (LDLRGYRYEE…GFGVTVAELK (76 aa)).

It belongs to the DNA mismatch repair MutS family. MutS2 subfamily. In terms of assembly, homodimer. Binds to stalled ribosomes, contacting rRNA.

In terms of biological role, endonuclease that is involved in the suppression of homologous recombination and thus may have a key role in the control of bacterial genetic diversity. Its function is as follows. Acts as a ribosome collision sensor, splitting the ribosome into its 2 subunits. Detects stalled/collided 70S ribosomes which it binds and splits by an ATP-hydrolysis driven conformational change. Acts upstream of the ribosome quality control system (RQC), a ribosome-associated complex that mediates the extraction of incompletely synthesized nascent chains from stalled ribosomes and their subsequent degradation. Probably generates substrates for RQC. In Staphylococcus epidermidis (strain ATCC 12228 / FDA PCI 1200), this protein is Endonuclease MutS2.